The chain runs to 438 residues: Prenyltransferase malE (438 aa).

Glutamate 92 contributes to the substrate binding site. Positions 106, 192, 194, 259, 261, 346, and 411 each coordinate dimethylallyl diphosphate.

This sequence belongs to the tryptophan dimethylallyltransferase family.

The enzyme catalyses (S)-3-(indol-3-ylmethyl)-6,7,8,8a-tetrahydropyrrolo[1,2-a]pyrazin-1-one + dimethylallyl diphosphate = (S)-3-{[2-(1,1-dimethylallyl)-indol-3-yl]methyl}-6,7,8,8a-tetrahydropyrrolo[1,2-a]pyrazin-1-one + diphosphate. It carries out the reaction 1-hydroxy-3-(indol-3-ylmethyl)-6H,7H,8H-5lambda(5)-pyrrolo[1,2-a]pyrazine + dimethylallyl diphosphate = 1-hydroxy-3-{[2-(1,1-dimethylallyl)-indol-3-yl]methyl}-6H,7H,8H-5lambda(5)-pyrrolo[1,2-a]pyrazine + diphosphate. The protein operates within alkaloid biosynthesis. Functionally, prenyltransferase; part of the gene cluster that mediates the biosynthesis of malbrancheamide, a dichlorinated fungal indole alkaloid that belongs to a family of natural products containing a characteristic bicyclo[2.2.2]diazaoctane core. The first step of malbrancheamide biosynthesis involves coupling of L-proline and L-tryptophan by malG, a bimodular NRPS, to produce L-Pro-L-Trp aldehyde through reductive offloading. This compound undergoes spontaneous cyclization and dehydration to give a dienamine which is reverse prenylated at C-2 by malE. The other prenyltransferase present in the cluster, malB, displays modest activity, suggesting that may be a redundant gene in the pathway. Subsequently, a [4+2] Diels-Alder cyclo-addition catalyzed by the bifunctional enzyme malC forms the characteristic bicyclo[2.2.2]diazaoctane ring of premalbrancheamid. Finally, the flavin-dependent halogenase malA catalyzes the iterative dichlorination of the indole ring of premalbrancheamide to yield C-9 monochlorinated malbrancheamide B, C-8 monochlorinated isomalbrancheamide B, and dichlorinated malbrancheamide. MalA is also able to brominate premalbrancheamide at C-9 to yield malbrancheamide C, and, to a lesser extend, at C-8 to yield isomalbrancheamide C. Finally, malA can brominate C-9 monochlorinated malbrancheamide B at C-8 to yield malbrancheamide D, or C-8 monochlorinated isomalbrancheamide B at C-9 to produce isomalbrancheamide D. The protein is Prenyltransferase malE of Malbranchea aurantiaca.